Consider the following 308-residue polypeptide: Ribosomal RNA small subunit methyltransferase H (308 aa).

S-adenosyl-L-methionine-binding positions include 31 to 33 (GGH), D51, F75, D97, and Q104.

It belongs to the methyltransferase superfamily. RsmH family.

Its subcellular location is the cytoplasm. It catalyses the reaction cytidine(1402) in 16S rRNA + S-adenosyl-L-methionine = N(4)-methylcytidine(1402) in 16S rRNA + S-adenosyl-L-homocysteine + H(+). Specifically methylates the N4 position of cytidine in position 1402 (C1402) of 16S rRNA. This is Ribosomal RNA small subunit methyltransferase H from Tolumonas auensis (strain DSM 9187 / NBRC 110442 / TA 4).